Reading from the N-terminus, the 191-residue chain is dCTP deaminase, dUMP-forming (191 aa).

Residues 101–106 (KSSLGR), Asp119, 127–129 (TLE), Gln148, Tyr162, and Gln174 each bind dCTP. Glu129 acts as the Proton donor/acceptor in catalysis. The tract at residues 163–191 (GSAKYGSRYQGQRGPTPSRSYQNFHRTPI) is disordered. Residues 171-191 (YQGQRGPTPSRSYQNFHRTPI) show a composition bias toward polar residues.

The protein belongs to the dCTP deaminase family. Homotrimer.

It carries out the reaction dCTP + 2 H2O = dUMP + NH4(+) + diphosphate. Its pathway is pyrimidine metabolism; dUMP biosynthesis; dUMP from dCTP: step 1/1. Its function is as follows. Bifunctional enzyme that catalyzes both the deamination of dCTP to dUTP and the hydrolysis of dUTP to dUMP without releasing the toxic dUTP intermediate. This is dCTP deaminase, dUMP-forming from Nocardioides sp. (strain ATCC BAA-499 / JS614).